The sequence spans 588 residues: MGKKSRVKTQKSGTGATASVSPKETLNLTSELLQKCSSPAPGPGKEWEEYVQIRSLVEKIRKKQKGLSVTFDGKREDYFPDLMKWASENGASVEGFEMVNFKEEGFGLRATRDIKAEELFLWVPRKLLMTVESAKNSVLGPLYSQDRILQAMGNITLAFHLLCERADPNSFWQPYIQTLPSEYDTPLYFEEDEVRDLQSTQAIHDVFSQYKNTARQYAYFYKVIQTHPHANKLPLKDAFTYEDYRWAVSSVMTRQNQIPTEDGSRVTLALIPLWDMCNHTNGLITTGYNLEDDRCECVALRDFRAGEQIYIFYGTRSNAEFVIHSGFFFDNNSHDRVKIKLGVSKSDRLYAMKAEVLARAGIPTSSVFALHYTDPPVSAQLLAFLRVFCMTEEELKEHLLGDNALDRIFTLGNSEYPVSWDNEVRLWTFLEDRASLLLKTYKTTIEEDKSFLRNHDLSVRATMAIKLRLGEKEILEKAVKSAAANREHYRKQMQAGAPLPRCEESGTAGARLPLALRDLEAEASVQEALSLTEAVGRAKAVENGLVNGENSIPNGTRSGKENFNQEGSERATEGTKESSSDSTAGARE.

The segment at 1–25 (MGKKSRVKTQKSGTGATASVSPKET) is disordered. Polar residues predominate over residues 10 to 25 (QKSGTGATASVSPKET). S-adenosyl-L-methionine contacts are provided by residues Arg75, 104 to 106 (EGF), Arg254, 275 to 279 (DMCNH), and 325 to 327 (SGF). The SET domain occupies 94–314 (EGFEMVNFKE…AGEQIYIFYG (221 aa)). The tract at residues 546–588 (VNGENSIPNGTRSGKENFNQEGSERATEGTKESSSDSTAGARE) is disordered. The span at 548 to 566 (GENSIPNGTRSGKENFNQE) shows a compositional bias: polar residues. Over residues 567-579 (GSERATEGTKESS) the composition is skewed to basic and acidic residues.

Belongs to the class V-like SAM-binding methyltransferase superfamily. SETD3 actin-histidine methyltransferase family. Interacts with MYOD1. In terms of processing, phosphorylated by GSK3B, which is required for recognition by the SCF(FBXW7) complex and subsequent degradation. Post-translationally, ubiquitinated by the SCF(FBXW7) complex following phosphorylation by GSK3B, leading to its degradation by the proteasome.

It localises to the cytoplasm. It is found in the nucleus. It catalyses the reaction L-histidyl-[protein] + S-adenosyl-L-methionine = N(tele)-methyl-L-histidyl-[protein] + S-adenosyl-L-homocysteine + H(+). Functionally, protein-histidine N-methyltransferase that specifically mediates 3-methylhistidine (tele-methylhistidine) methylation of actin at 'His-73'. Histidine methylation of actin is required for smooth muscle contraction of the laboring uterus during delivery. Does not have protein-lysine N-methyltransferase activity and probably only catalyzes histidine methylation of actin. The chain is Actin-histidine N-methyltransferase from Canis lupus familiaris (Dog).